A 149-amino-acid chain; its full sequence is Deoxyuridine 5'-triphosphate nucleotidohydrolase (149 aa).

Substrate contacts are provided by residues 68 to 70, Asn-81, 85 to 87, and Met-95; these read RSG and LID.

This sequence belongs to the dUTPase family. It depends on Mg(2+) as a cofactor.

The catalysed reaction is dUTP + H2O = dUMP + diphosphate + H(+). It participates in pyrimidine metabolism; dUMP biosynthesis; dUMP from dCTP (dUTP route): step 2/2. This enzyme is involved in nucleotide metabolism: it produces dUMP, the immediate precursor of thymidine nucleotides and it decreases the intracellular concentration of dUTP so that uracil cannot be incorporated into DNA. This Polynucleobacter necessarius subsp. necessarius (strain STIR1) protein is Deoxyuridine 5'-triphosphate nucleotidohydrolase.